We begin with the raw amino-acid sequence, 887 residues long: Fibroblast growth factor receptor 2 (887 aa).

An N-terminal signal peptide occupies residues 1–18 (MLNKFIVIVTMLAMWNYA). At 19 to 416 (QDCNFELSKN…KDCVGNSYFT (398 aa)) the chain is on the extracellular side. Ig-like C2-type domains are found at residues 22-115 (NFEL…EFIS) and 180-260 (VSGS…LRMK). Residues asparagine 28, asparagine 74, asparagine 93, asparagine 230, asparagine 261, asparagine 268, asparagine 328, asparagine 334, and asparagine 364 are each glycosylated (N-linked (GlcNAc...) asparagine). Cysteines 43 and 104 form a disulfide. The Ig-like C2-type 3 domain maps to 297 to 387 (FNLNSRVCIN…YACRIINFKD (91 aa)). An intrachain disulfide couples cysteine 313 to cysteine 380. A helical transmembrane segment spans residues 417–437 (IIWYSISVGIIILVVISFLII). The Cytoplasmic segment spans residues 438–887 (RLYNKYSNGY…SNQCYSTTIV (450 aa)). The Protein kinase domain occupies 585 to 862 (LIIGSKIGEG…IIDKLTHIQL (278 aa)). ATP-binding positions include 591–599 (IGEGAFGIV) and lysine 619. The Proton acceptor role is filled by aspartate 728. Position 757 is a phosphotyrosine; by autocatalysis (tyrosine 757).

It belongs to the protein kinase superfamily. Tyr protein kinase family. Fibroblast growth factor receptor subfamily. Expressed in brain, stem cells and the mesenchymal cells.

It localises to the membrane. The catalysed reaction is L-tyrosyl-[protein] + ATP = O-phospho-L-tyrosyl-[protein] + ADP + H(+). In terms of biological role, receptor for basic fibroblast growth factor. The chain is Fibroblast growth factor receptor 2 (FGFR2) from Dugesia japonica (Planarian).